A 132-amino-acid chain; its full sequence is Phosphoribosyl-ATP pyrophosphatase (132 aa).

The protein belongs to the PRA-PH family.

The protein localises to the cytoplasm. It catalyses the reaction 1-(5-phospho-beta-D-ribosyl)-ATP + H2O = 1-(5-phospho-beta-D-ribosyl)-5'-AMP + diphosphate + H(+). It participates in amino-acid biosynthesis; L-histidine biosynthesis; L-histidine from 5-phospho-alpha-D-ribose 1-diphosphate: step 2/9. This chain is Phosphoribosyl-ATP pyrophosphatase, found in Acidovorax sp. (strain JS42).